The primary structure comprises 105 residues: Probable non-functional immunoglobulin lambda variable 5-48 (105 aa).

An N-terminal signal peptide occupies residues 1-19; that stretch reads MAWTPLLLLFLSHCTGSLS. The tract at residues 20 to 44 is framework-1; it reads QAVLTQPTSLSASPGASARLTCTLR. In terms of domain architecture, Ig-like spans 20–105; the sequence is QAVLTQPTSL…NAGILFISGL (86 aa). The interval 45 to 53 is complementarity-determining-1; sequence SGISVGSYR. Positions 54–70 are framework-2; that stretch reads IYWYQQKPGSPPRYLLN. Residues 71 to 77 are complementarity-determining-2; sequence YYSDSDK. A framework-3 region spans residues 78 to 105; that stretch reads HQGSGVPSRFSGSKDASTNAGILFISGL.

Immunoglobulins are composed of two identical heavy chains and two identical light chains; disulfide-linked.

The protein localises to the secreted. It is found in the cell membrane. Probable non-functional open reading frame (ORF) of V region of the variable domain of immunoglobulin light chains. Non-functional ORF generally cannot participate in the synthesis of a productive immunoglobulin chain due to altered V-(D)-J or switch recombination and/or splicing site (at mRNA level) and/or conserved amino acid change (protein level). Immunoglobulins, also known as antibodies, are membrane-bound or secreted glycoproteins produced by B lymphocytes. In the recognition phase of humoral immunity, the membrane-bound immunoglobulins serve as receptors which, upon binding of a specific antigen, trigger the clonal expansion and differentiation of B lymphocytes into immunoglobulins-secreting plasma cells. Secreted immunoglobulins mediate the effector phase of humoral immunity, which results in the elimination of bound antigens. The antigen binding site is formed by the variable domain of one heavy chain, together with that of its associated light chain. Thus, each immunoglobulin has two antigen binding sites with remarkable affinity for a particular antigen. The variable domains are assembled by a process called V-(D)-J rearrangement and can then be subjected to somatic hypermutations which, after exposure to antigen and selection, allow affinity maturation for a particular antigen. In Homo sapiens (Human), this protein is Probable non-functional immunoglobulin lambda variable 5-48.